The sequence spans 151 residues: C-C motif chemokine 25 (151 aa).

The signal sequence occupies residues 1–22 (MNLWLLVCLVASLMGAWSTVHT). 2 disulfides stabilise this stretch: Cys-29-Cys-57 and Cys-30-Cys-73. The segment at 94 to 151 (THSKQHLGSRRNLQDSHLGGQRSNTGMSRLAHSKSKSSRSTRSNKKKTSFLNMANPGP) is disordered. Positions 124-141 (AHSKSKSSRSTRSNKKKT) are enriched in basic residues.

Belongs to the intercrine beta (chemokine CC) family.

It localises to the secreted. Its function is as follows. Potentially involved in T-cell development. Recombinant protein shows chemotactic activity on thymocytes, macrophages, THP-1 cells, and dendritics cells but is inactive on peripheral blood lymphocytes and neutrophils. Binds to CCR9. Binds to atypical chemokine receptor ACKR4 and mediates the recruitment of beta-arrestin (ARRB1/2) to ACKR4. The sequence is that of C-C motif chemokine 25 (CCL25) from Canis lupus familiaris (Dog).